We begin with the raw amino-acid sequence, 631 residues long: Nucleoside triphosphatase I (631 aa).

The Helicase ATP-binding domain maps to 42–204 (FLGLDSMHSL…TMLVNLLRPG (163 aa)). 55–62 (HETGVGKT) is a binding site for ATP. Positions 141-144 (DECH) match the DEXH box motif. The 166-residue stretch at 367–532 (KFIDVCLGIL…EFVQLFRVFK (166 aa)) folds into the Helicase C-terminal domain.

This sequence belongs to the helicase family. NPH I subfamily. Monomer.

The enzyme catalyses a ribonucleoside 5'-triphosphate + H2O = a ribonucleoside 5'-diphosphate + phosphate + H(+). Its function is as follows. Serves two roles in transcription; it acts in concert with viral termination factor/capping enzyme to catalyze release of UUUUUNU-containing nascent RNA from the elongation complex, and it acts by itself as a polymerase elongation factor to facilitate readthrough of intrinsic pause sites. This Homo sapiens (Human) protein is Nucleoside triphosphatase I (NPH1).